An 803-amino-acid polypeptide reads, in one-letter code: Urocanate reductase (803 aa).

Ser-258 carries the FMN phosphoryl serine modification. FAD-binding residues include Ala-311, Glu-330, Asn-338, Thr-339, Gly-343, Gly-344, and Asp-573. Arg-632 serves as the catalytic Proton donor. 4 residues coordinate FAD: His-739, Glu-768, Ala-783, and Leu-784.

It belongs to the FAD-dependent oxidoreductase 2 family. FRD/SDH subfamily. FAD is required as a cofactor. Requires FMN as cofactor.

It carries out the reaction dihydrourocanate + A = urocanate + AH2. In terms of biological role, catalyzes the two-electron reduction of urocanate to dihydrourocanate (also named imidazole propionate or deamino-histidine). Dihydrourocanate is present at higher concentrations in subjects with type 2 diabetes, and directly impairs glucose tolerance and insulin signaling at the level of insulin receptor substrate (IRS) through activation of p38 gamma (MAPK12)-p62-mTORC1. Therefore, the UrdA enzyme from the gut bacteria S.mutans strain UA159 may contribute to the pathogenesis of type 2 diabetes by producing the microbial metabolite dihydrourocanate. In Streptococcus mutans serotype c (strain ATCC 700610 / UA159), this protein is Urocanate reductase.